A 315-amino-acid polypeptide reads, in one-letter code: Probable cell division protein WhiA (315 aa).

The segment at residues 277–311 (SLQELGAMMPSGQISKSGVNHRLRKLNQIAEGYQQ) is a DNA-binding region (H-T-H motif).

The protein belongs to the WhiA family.

Involved in cell division and chromosome segregation. The polypeptide is Probable cell division protein WhiA (Lacticaseibacillus casei (strain BL23) (Lactobacillus casei)).